Reading from the N-terminus, the 136-residue chain is Large ribosomal subunit protein uL16 (136 aa).

The protein belongs to the universal ribosomal protein uL16 family. Part of the 50S ribosomal subunit.

Its function is as follows. Binds 23S rRNA and is also seen to make contacts with the A and possibly P site tRNAs. This chain is Large ribosomal subunit protein uL16, found in Orientia tsutsugamushi (strain Boryong) (Rickettsia tsutsugamushi).